Reading from the N-terminus, the 131-residue chain is Maturin (131 aa).

Tyr-34 carries the phosphotyrosine modification. Residues 107–120 (FEEYSADVEEEEPE) show a composition bias toward acidic residues. Residues 107 to 131 (FEEYSADVEEEEPEADHPQMGVSQQ) form a disordered region.

It belongs to the MTURN family. Post-translationally, phosphorylation at Tyr-34 is essential for its ability to promote megakaryocyte differentiation. As to expression, expressed in the thymus, bone marrow and spleen.

Its subcellular location is the cytoplasm. Its function is as follows. Promotes megakaryocyte differentiation by enhancing ERK and JNK signaling as well as up-regulating RUNX1 and FLI1 expression. Represses NF-kappa-B transcriptional activity by inhibiting phosphorylation of RELA at 'Ser- 536'. May be involved in early neuronal development. The protein is Maturin (Mturn) of Mus musculus (Mouse).